A 554-amino-acid chain; its full sequence is MTPLIFVTGGVVSSLGKGIAAASLASILEARGLKVTMVKLDPYINVDPGTMSPFQHGEVYVTDDGAETDLDLGHYERFVRTRLSRKNSVTTGRIYQNVICKERRGDYLGATVQVIPHITDEIRRCIDEATASFDVALVEIGGTVGDIESLPFLEAIRQVRIERGAERTMFMHLTLVPYIAAAGELKTKPTQHSVKELRSIGIQPDVLLCRSEQVIPDSERRKIALFTNVSERAVIGCPDIDVLYGMPLELRRQGLDEIVIDQFKLSGTASLADLSEWEDVVDAIKHPLDEVTIAVVGKYVDYQDAYKSVGEALKHGGLRQRTKVNLKWVEAQDLEGSDMAALKDIDGILVPGGFGDRGFEGKVLASRYAREQRVPYFGICYGMQAAVVDYARHVAGLEGANSTENDRQSSHPVIALITEWRTTTGEVERRDEKSDLGGTMRLGLQEQRLKAGTLARELYGRDVVGERHRHRYEFNNRYRTQLEDAGLVIAAKSMDDTLVEMIELPREMHPWFLACQAHPEFLSTPRDGHPLFIGFVKASRARKAGGKLLREVCV.

The tract at residues 1 to 265 (MTPLIFVTGG…DEIVIDQFKL (265 aa)) is amidoligase domain. Residue Ser-13 participates in CTP binding. Position 13 (Ser-13) interacts with UTP. Residues 14 to 19 (SLGKGI) and Asp-71 contribute to the ATP site. Mg(2+) is bound by residues Asp-71 and Glu-139. CTP is bound by residues 146–148 (DIE), 186–191 (KTKPTQ), and Lys-222. UTP-binding positions include 186-191 (KTKPTQ) and Lys-222. Residues 292–545 (TIAVVGKYVD…VKASRARKAG (254 aa)) enclose the Glutamine amidotransferase type-1 domain. An L-glutamine-binding site is contributed by Gly-353. The active-site Nucleophile; for glutamine hydrolysis is the Cys-380. Residues 381 to 384 (YGMQ), Glu-404, and Arg-471 each bind L-glutamine. Active-site residues include His-518 and Glu-520.

It belongs to the CTP synthase family. Homotetramer.

The enzyme catalyses UTP + L-glutamine + ATP + H2O = CTP + L-glutamate + ADP + phosphate + 2 H(+). The catalysed reaction is L-glutamine + H2O = L-glutamate + NH4(+). It carries out the reaction UTP + NH4(+) + ATP = CTP + ADP + phosphate + 2 H(+). It participates in pyrimidine metabolism; CTP biosynthesis via de novo pathway; CTP from UDP: step 2/2. With respect to regulation, allosterically activated by GTP, when glutamine is the substrate; GTP has no effect on the reaction when ammonia is the substrate. The allosteric effector GTP functions by stabilizing the protein conformation that binds the tetrahedral intermediate(s) formed during glutamine hydrolysis. Inhibited by the product CTP, via allosteric rather than competitive inhibition. Its function is as follows. Catalyzes the ATP-dependent amination of UTP to CTP with either L-glutamine or ammonia as the source of nitrogen. Regulates intracellular CTP levels through interactions with the four ribonucleotide triphosphates. The chain is CTP synthase from Xylella fastidiosa (strain M23).